The primary structure comprises 336 residues: tRNA N6-adenosine threonylcarbamoyltransferase (336 aa).

Residues H108 and H112 each contribute to the Fe cation site. Residues 129-133, D161, E178, and S258 each bind substrate; that span reads LISGG. D286 provides a ligand contact to Fe cation.

The protein belongs to the KAE1 / TsaD family. The cofactor is Fe(2+).

Its subcellular location is the cytoplasm. The catalysed reaction is L-threonylcarbamoyladenylate + adenosine(37) in tRNA = N(6)-L-threonylcarbamoyladenosine(37) in tRNA + AMP + H(+). Required for the formation of a threonylcarbamoyl group on adenosine at position 37 (t(6)A37) in tRNAs that read codons beginning with adenine. Is probably involved in the transfer of the threonylcarbamoyl moiety of threonylcarbamoyl-AMP (TC-AMP) to the N6 group of A37. The polypeptide is tRNA N6-adenosine threonylcarbamoyltransferase (Pyrobaculum neutrophilum (strain DSM 2338 / JCM 9278 / NBRC 100436 / V24Sta) (Thermoproteus neutrophilus)).